Here is a 222-residue protein sequence, read N- to C-terminus: Putative auxin response factor 23 (222 aa).

A DNA-binding region (TF-B3) is located at residues 126 to 222 (FTKVLTASDT…ETGELRVGIR (97 aa)).

Belongs to the ARF family. As to quaternary structure, homo and heterodimers.

It is found in the nucleus. Its function is as follows. Auxin response factors (ARFs) are transcriptional factors that binds specifically to the DNA sequence 5'-TGTCTC-3' found in the auxin-responsive promoter elements (AuxREs). Could act as transcriptional activator or repressor. Formation of heterodimers with Aux/IAA proteins may alter their ability to modulate early auxin response genes expression. This is Putative auxin response factor 23 (ARF23) from Arabidopsis thaliana (Mouse-ear cress).